Consider the following 250-residue polypeptide: Peroxiredoxin (250 aa).

In terms of domain architecture, Thioredoxin spans 6 to 163; the sequence is PLIGERFPEM…ILRIVKALKL (158 aa). Cys50 acts as the Cysteine sulfenic acid (-SOH) intermediate in catalysis. Arg126 serves as a coordination point for substrate. Cys207 and Cys213 form a disulfide bridge.

The protein belongs to the peroxiredoxin family. Prx6 subfamily. In terms of assembly, homodecamer. Pentamer of dimers that assemble into a ring structure.

It localises to the cytoplasm. It catalyses the reaction a hydroperoxide + [thioredoxin]-dithiol = an alcohol + [thioredoxin]-disulfide + H2O. Its function is as follows. Thiol-specific peroxidase that catalyzes the reduction of hydrogen peroxide and organic hydroperoxides to water and alcohols, respectively. Plays a role in cell protection against oxidative stress by detoxifying peroxides. In Aeropyrum pernix (strain ATCC 700893 / DSM 11879 / JCM 9820 / NBRC 100138 / K1), this protein is Peroxiredoxin.